Here is a 496-residue protein sequence, read N- to C-terminus: Sugar transporter ERD6 (496 aa).

The next 6 helical transmembrane spans lie at 58–78, 94–114, 128–148, 156–176, 183–203, and 211–231; these read VFLS…GVGF, VAEY…GAVF, MLFC…AQNA, LLLG…IAEI, GSFV…FFII, and LLTV…FFIP. Position 256 is a phosphoserine (Ser-256). 6 consecutive transmembrane segments (helical) span residues 292–312, 329–349, 364–384, 394–414, 430–450, and 456–476; these read YPLI…SSGV, IGTS…TVLV, AMGL…FGIL, IGVL…PWII, LVTV…NFML, and GMFL…YFLV.

This sequence belongs to the major facilitator superfamily. Sugar transporter (TC 2.A.1.1) family. Expressed in both shoots and roots. In roots, expressed in epidermal cells and especially strongly in cortex cells. In flowers, expressed in sepals.

Its subcellular location is the membrane. Sugar transporter. The protein is Sugar transporter ERD6 (ERD6) of Arabidopsis thaliana (Mouse-ear cress).